The primary structure comprises 389 residues: Nucleic acid dioxygenase ALKBH1 (389 aa).

The interval 1-127 (MGKMAAAVAS…CLKLYSQKPN (127 aa)) is interaction with DNAJB6. A tRNA-binding region spans residues 86–389 (SKWRAYGLEG…VKRKRLNPNS (304 aa)). Substrate contacts are provided by residues Trp144 and 175–177 (YHY). The Fe2OG dioxygenase domain maps to 213-347 (QAEAGILNYY…RVNMTVRQVL (135 aa)). 220–222 (NYY) contacts 2-oxoglutarate. Residues His231, Asp233, and His287 each coordinate Fe cation. Position 233 (Asp233) interacts with substrate. A 2-oxoglutarate-binding site is contributed by 338-344 (RVNMTVR).

Monomer. Interacts with DNAJB6. Fe(2+) is required as a cofactor. In terms of tissue distribution, in adult organs, highly expressed in testis, eye, brain and kidney.

It is found in the nucleus. The enzyme catalyses an N(6)-methyl-2'-deoxyadenosine in DNA + 2-oxoglutarate + O2 = a 2'-deoxyadenosine in DNA + formaldehyde + succinate + CO2. It carries out the reaction 2'-deoxyribonucleotide-(2'-deoxyribose 5'-phosphate)-2'-deoxyribonucleotide-DNA = a 3'-end 2'-deoxyribonucleotide-(2,3-dehydro-2,3-deoxyribose 5'-phosphate)-DNA + a 5'-end 5'-phospho-2'-deoxyribonucleoside-DNA + H(+). It catalyses the reaction a methylated nucleobase within DNA + 2-oxoglutarate + O2 = a nucleobase within DNA + formaldehyde + succinate + CO2. The catalysed reaction is an N(1)-methyladenosine in tRNA + 2-oxoglutarate + O2 = an adenosine in tRNA + formaldehyde + succinate + CO2. The enzyme catalyses 5-methylcytidine(34) in mitochondrial tRNA(Met) + 2 2-oxoglutarate + 2 O2 = 5-formylcytidine(34) in mitochondrial tRNA(Met) + 2 succinate + 2 CO2 + H2O. It carries out the reaction an N(3)-methylcytidine in mRNA + 2-oxoglutarate + O2 = a cytidine in mRNA + formaldehyde + succinate + CO2. It catalyses the reaction N(1)-methyladenosine(58) in tRNA + 2-oxoglutarate + O2 = adenosine(58) in tRNA + formaldehyde + succinate + CO2. Its function is as follows. Dioxygenase that acts on nucleic acids, such as DNA and tRNA. Requires molecular oxygen, alpha-ketoglutarate and iron. A number of activities have been described for this dioxygenase, but recent results suggest that it mainly acts on tRNAs and mediates their demethylation or oxidation depending on the context and subcellular compartment. Mainly acts as a tRNA demethylase by removing N(1)-methyladenine from various tRNAs, with a preference for N(1)-methyladenine at position 58 (m1A58) present on a stem loop structure of tRNAs. Acts as a regulator of translation initiation and elongation in response to glucose deprivation: regulates both translation initiation, by mediating demethylation of tRNA(Met), and translation elongation, N(1)-methyladenine-containing tRNAs being preferentially recruited to polysomes to promote translation elongation. In mitochondrion, specifically interacts with mt-tRNA(Met) and mediates oxidation of mt-tRNA(Met) methylated at cytosine(34) to form 5-formylcytosine (f(5)c) at this position. mt-tRNA(Met) containing the f(5)c modification at the wobble position enables recognition of the AUA codon in addition to the AUG codon, expanding codon recognition in mitochondrial translation. Specifically demethylates DNA methylated on the 6th position of adenine (N(6)-methyladenosine) DNA. N(6)-methyladenosine (m6A) DNA is present at some L1 elements in embryonic stem cells and probably promotes their silencing. Demethylates mRNAs containing N(3)-methylcytidine modification. Also able to repair alkylated single-stranded DNA by oxidative demethylation, but with low activity. Also has DNA lyase activity and introduces double-stranded breaks at abasic sites: cleaves both single-stranded DNA and double-stranded DNA at abasic sites, with the greatest activity towards double-stranded DNA with two abasic sites. DNA lyase activity does not require alpha-ketoglutarate and iron and leads to the formation of an irreversible covalent protein-DNA adduct with the 5' DNA product. DNA lyase activity is not required during base excision repair and class switch recombination of the immunoglobulin heavy chain during B lymphocyte activation. May play a role in placental trophoblast lineage differentiation. This is Nucleic acid dioxygenase ALKBH1 from Mus musculus (Mouse).